Consider the following 123-residue polypeptide: Large ribosomal subunit protein bL12 (123 aa).

It belongs to the bacterial ribosomal protein bL12 family. In terms of assembly, homodimer. Part of the ribosomal stalk of the 50S ribosomal subunit. Forms a multimeric L10(L12)X complex, where L10 forms an elongated spine to which 2 to 4 L12 dimers bind in a sequential fashion. Binds GTP-bound translation factors.

Forms part of the ribosomal stalk which helps the ribosome interact with GTP-bound translation factors. Is thus essential for accurate translation. This chain is Large ribosomal subunit protein bL12, found in Roseobacter denitrificans (strain ATCC 33942 / OCh 114) (Erythrobacter sp. (strain OCh 114)).